Here is a 42-residue protein sequence, read N- to C-terminus: Bacteriocin bavaricin-MN (42 aa).

Cys-10 and Cys-15 are oxidised to a cystine.

It belongs to the bacteriocin class IIA/YGNGV family.

The protein resides in the secreted. Its function is as follows. Has antimicrobial activity. This chain is Bacteriocin bavaricin-MN, found in Latilactobacillus sakei (Lactobacillus sakei).